The following is a 247-amino-acid chain: ATP synthase subunit a, chloroplastic (247 aa).

Transmembrane regions (helical) follow at residues 38–58 (QVLITSWVVITILLGSVVIAV), 95–115 (VPFIGTMFLFIFVSNWSGALL), 134–154 (INTTVALALLTSAAYFYAGLS), 199–219 (LVVVVLVSLVPLVVPIPVMFL), and 220–240 (GLFTSGIQALIFATLAAAYIG).

The protein belongs to the ATPase A chain family. F-type ATPases have 2 components, CF(1) - the catalytic core - and CF(0) - the membrane proton channel. CF(1) has five subunits: alpha(3), beta(3), gamma(1), delta(1), epsilon(1). CF(0) has four main subunits: a, b, b' and c.

It is found in the plastid. Its subcellular location is the chloroplast thylakoid membrane. In terms of biological role, key component of the proton channel; it plays a direct role in the translocation of protons across the membrane. This Lolium perenne (Perennial ryegrass) protein is ATP synthase subunit a, chloroplastic.